Reading from the N-terminus, the 356-residue chain is Tyrosine recombinase XerS (356 aa).

In terms of domain architecture, Core-binding (CB) spans Leu-16–Thr-121. Residues Lys-169–Asp-354 form the Tyr recombinase domain. Catalysis depends on residues Arg-210, Lys-234, His-306, Arg-309, and His-332. Catalysis depends on Tyr-341, which acts as the O-(3'-phospho-DNA)-tyrosine intermediate.

It belongs to the 'phage' integrase family. XerS subfamily.

It is found in the cytoplasm. With respect to regulation, ftsK is required for recombination. Its function is as follows. Site-specific tyrosine recombinase, which acts by catalyzing the cutting and rejoining of the recombining DNA molecules. Essential to convert dimers of the bacterial chromosome into monomers to permit their segregation at cell division. The protein is Tyrosine recombinase XerS of Streptococcus thermophilus (strain ATCC BAA-250 / LMG 18311).